A 241-amino-acid polypeptide reads, in one-letter code: Methylthioribulose-1-phosphate dehydratase (241 aa).

Cys102 lines the substrate pocket. His120, His122, and His199 together coordinate Zn(2+).

Belongs to the aldolase class II family. MtnB subfamily. The cofactor is Zn(2+).

Its subcellular location is the cytoplasm. The enzyme catalyses 5-(methylsulfanyl)-D-ribulose 1-phosphate = 5-methylsulfanyl-2,3-dioxopentyl phosphate + H2O. It functions in the pathway amino-acid biosynthesis; L-methionine biosynthesis via salvage pathway; L-methionine from S-methyl-5-thio-alpha-D-ribose 1-phosphate: step 2/6. Catalyzes the dehydration of methylthioribulose-1-phosphate (MTRu-1-P) into 2,3-diketo-5-methylthiopentyl-1-phosphate (DK-MTP-1-P). This is Methylthioribulose-1-phosphate dehydratase from Coprinopsis cinerea (strain Okayama-7 / 130 / ATCC MYA-4618 / FGSC 9003) (Inky cap fungus).